The following is a 402-amino-acid chain: Acetate kinase (402 aa).

Residue N10 coordinates Mg(2+). ATP is bound at residue K17. R89 provides a ligand contact to substrate. The active-site Proton donor/acceptor is the D148. ATP-binding positions include 208 to 212 (HLGNG), 283 to 285 (DCR), and 334 to 338 (GIGEN). E389 contacts Mg(2+).

This sequence belongs to the acetokinase family. In terms of assembly, homodimer. Requires Mg(2+) as cofactor. Mn(2+) is required as a cofactor.

It is found in the cytoplasm. The enzyme catalyses acetate + ATP = acetyl phosphate + ADP. It functions in the pathway metabolic intermediate biosynthesis; acetyl-CoA biosynthesis; acetyl-CoA from acetate: step 1/2. Its function is as follows. Catalyzes the formation of acetyl phosphate from acetate and ATP. Can also catalyze the reverse reaction. This chain is Acetate kinase, found in Actinobacillus pleuropneumoniae serotype 7 (strain AP76).